The following is a 443-amino-acid chain: UPF0656 protein C926.02 (443 aa).

This sequence belongs to the UPF0656 family.

It is found in the cytoplasm. Its subcellular location is the nucleus. This is UPF0656 protein C926.02 from Schizosaccharomyces pombe (strain 972 / ATCC 24843) (Fission yeast).